The chain runs to 500 residues: Histidine--tRNA ligase (500 aa).

This sequence belongs to the class-II aminoacyl-tRNA synthetase family. As to quaternary structure, homodimer.

The protein localises to the cytoplasm. It catalyses the reaction tRNA(His) + L-histidine + ATP = L-histidyl-tRNA(His) + AMP + diphosphate + H(+). This is Histidine--tRNA ligase (hisS) from Mesorhizobium japonicum (strain LMG 29417 / CECT 9101 / MAFF 303099) (Mesorhizobium loti (strain MAFF 303099)).